A 589-amino-acid chain; its full sequence is Arginine--tRNA ligase (589 aa).

The 'HIGH' region motif lies at 132–142 (PNTNKPLHVGH).

This sequence belongs to the class-I aminoacyl-tRNA synthetase family. In terms of assembly, monomer.

The protein resides in the cytoplasm. The enzyme catalyses tRNA(Arg) + L-arginine + ATP = L-arginyl-tRNA(Arg) + AMP + diphosphate. This chain is Arginine--tRNA ligase, found in Treponema pallidum subsp. pallidum (strain SS14).